The following is a 319-amino-acid chain: Dehydrogenase/reductase SDR family member 9 (319 aa).

A signal peptide spans 1–20; that stretch reads MLFWLLALLFLCAFLWNYKG. NAD(+) is bound by residues 34-58 and aspartate 83; that span reads ITGC…RVIA. Serine 164 lines the substrate pocket. Tyrosine 176 acts as the Proton acceptor in catalysis. Lysine 180 is an NAD(+) binding site.

Belongs to the short-chain dehydrogenases/reductases (SDR) family. In terms of assembly, homotetramer.

The protein resides in the microsome membrane. Its subcellular location is the endoplasmic reticulum membrane. It catalyses the reaction 3beta-hydroxy-5alpha-pregnane-20-one + NAD(+) = 5alpha-pregnane-3,20-dione + NADH + H(+). It carries out the reaction 17beta-hydroxy-5alpha-androstan-3-one + NAD(+) = 5alpha-androstan-3,17-dione + NADH + H(+). The catalysed reaction is androsterone + NAD(+) = 5alpha-androstan-3,17-dione + NADH + H(+). The enzyme catalyses 5alpha-androstane-3alpha,17beta-diol + NAD(+) = 17beta-hydroxy-5alpha-androstan-3-one + NADH + H(+). It catalyses the reaction all-trans-retinol + NAD(+) = all-trans-retinal + NADH + H(+). It carries out the reaction 3alpha-hydroxy-5alpha-pregnan-20-one + NAD(+) = 5alpha-pregnane-3,20-dione + NADH + H(+). 3-alpha-hydroxysteroid dehydrogenase that converts 3-alpha-tetrahydroprogesterone (allopregnanolone) to dihydroxyprogesterone and 3-alpha-androstanediol to dihydroxyprogesterone. Also plays a role in the biosynthesis of retinoic acid. Can utilize both NADH and NADPH. This is Dehydrogenase/reductase SDR family member 9 (Dhrs9) from Mus musculus (Mouse).